We begin with the raw amino-acid sequence, 382 residues long: Lipoyl synthase, mitochondrial (382 aa).

A mitochondrion-targeting transit peptide spans 1 to 30 (MHGRRHLAASLARALTYAPSRSISSTPSLL). The span at 25-34 (STPSLLQTLD) shows a compositional bias: polar residues. The interval 25–47 (STPSLLQTLDPSTPSPAAAPPTA) is disordered. C112, C117, C123, C143, C147, C150, and S359 together coordinate [4Fe-4S] cluster. In terms of domain architecture, Radical SAM core spans 128–348 (ETGTATATIM…RSLGVDMGFR (221 aa)).

Belongs to the radical SAM superfamily. Lipoyl synthase family. Requires [4Fe-4S] cluster as cofactor.

The protein resides in the mitochondrion. It carries out the reaction [[Fe-S] cluster scaffold protein carrying a second [4Fe-4S](2+) cluster] + N(6)-octanoyl-L-lysyl-[protein] + 2 oxidized [2Fe-2S]-[ferredoxin] + 2 S-adenosyl-L-methionine + 4 H(+) = [[Fe-S] cluster scaffold protein] + N(6)-[(R)-dihydrolipoyl]-L-lysyl-[protein] + 4 Fe(3+) + 2 hydrogen sulfide + 2 5'-deoxyadenosine + 2 L-methionine + 2 reduced [2Fe-2S]-[ferredoxin]. The protein operates within protein modification; protein lipoylation via endogenous pathway; protein N(6)-(lipoyl)lysine from octanoyl-[acyl-carrier-protein]: step 2/2. Catalyzes the radical-mediated insertion of two sulfur atoms into the C-6 and C-8 positions of the octanoyl moiety bound to the lipoyl domains of lipoate-dependent enzymes, thereby converting the octanoylated domains into lipoylated derivatives. This chain is Lipoyl synthase, mitochondrial, found in Oryza sativa subsp. indica (Rice).